The primary structure comprises 571 residues: Phosphatidylinositol-3,5-bisphosphate 3-phosphatase MTMR2 (571 aa).

The region spanning 1–67 (MEEPPLLPGE…GVINRVEKIG (67 aa)) is the GRAM domain. The Myotubularin phosphatase domain occupies 133-508 (GWKVYDPIWE…RHLELWVGYY (376 aa)). A 1,2-diacyl-sn-glycero-3-phospho-(1D-myo-inositol-3,5-bisphosphate) is bound by residues asparagine 258, asparagine 283, and isoleucine 284. Residues asparagine 258, asparagine 283, and isoleucine 284 each coordinate a 1,2-diacyl-sn-glycero-3-phospho-(1D-myo-inositol-3-phosphate). Cysteine 345 (phosphocysteine intermediate) is an active-site residue. A 1,2-diacyl-sn-glycero-3-phospho-(1D-myo-inositol-3,5-bisphosphate) is bound by residues serine 346, aspartate 347, glycine 348, tryptophan 349, aspartate 350, arginine 351, arginine 387, and arginine 391. A 1,2-diacyl-sn-glycero-3-phospho-(1D-myo-inositol-3-phosphate) is bound by residues serine 346, aspartate 347, glycine 348, tryptophan 349, aspartate 350, and arginine 351. A 1,2-diacyl-sn-glycero-3-phospho-(1D-myo-inositol-3-phosphate) is bound at residue arginine 391. The stretch at 521–553 (VHNRYKELLAKRAELQKKVEELQREITNRSTSS) forms a coiled coil. Positions 544 to 571 (REITNRSTSSSERAGSPAQCVTPVQTVV) are disordered.

Belongs to the protein-tyrosine phosphatase family. Non-receptor class myotubularin subfamily. As to quaternary structure, homooligomer and heterooligomer.

The protein localises to the cytoplasm. It is found in the early endosome membrane. The catalysed reaction is a 1,2-diacyl-sn-glycero-3-phospho-(1D-myo-inositol-3,5-bisphosphate) + H2O = a 1,2-diacyl-sn-glycero-3-phospho-(1D-myo-inositol-5-phosphate) + phosphate. It carries out the reaction a 1,2-diacyl-sn-glycero-3-phospho-(1D-myo-inositol-3-phosphate) + H2O = a 1,2-diacyl-sn-glycero-3-phospho-(1D-myo-inositol) + phosphate. The enzyme catalyses 1,2-dioctanoyl-sn-glycero-3-phospho-(1-D-myo-inositol-3-phosphate) + H2O = 1,2-dioctanoyl-sn-glycero-3-phospho-(1D-myo-inositol) + phosphate. It catalyses the reaction 1,2-dioctanoyl-sn-glycero-3-phospho-(1D-myo-inositol-3,5-bisphosphate) + H2O = 1,2-dioctanoyl-sn-glycero-3-phospho-(1D-myo-inositol-5-phosphate) + phosphate. In terms of biological role, lipid phosphatase that specifically dephosphorylates the D-3 position of phosphatidylinositol 3-phosphate and phosphatidylinositol 3,5-bisphosphate, generating phosphatidylinositol and phosphatidylinositol 5-phosphate. Regulates the level of these phosphoinositides critical for various biological processes including autophagy initiation and autophagosome maturation. This is Phosphatidylinositol-3,5-bisphosphate 3-phosphatase MTMR2 from Gallus gallus (Chicken).